We begin with the raw amino-acid sequence, 88 residues long: Small ribosomal subunit protein bS18A (88 aa).

The protein belongs to the bacterial ribosomal protein bS18 family. Part of the 30S ribosomal subunit. Forms a tight heterodimer with protein bS6.

In terms of biological role, binds as a heterodimer with protein bS6 to the central domain of the 16S rRNA, where it helps stabilize the platform of the 30S subunit. The polypeptide is Small ribosomal subunit protein bS18A (Mycolicibacterium gilvum (strain PYR-GCK) (Mycobacterium gilvum (strain PYR-GCK))).